A 33-amino-acid chain; its full sequence is RNA-directed RNA polymerase beta chain (33 aa).

In terms of assembly, the polymerase complex is composed of four chains, the three other proteins of the complex (alpha, gamma, and delta chains) are supplied by the host cell.

The catalysed reaction is RNA(n) + a ribonucleoside 5'-triphosphate = RNA(n+1) + diphosphate. In terms of biological role, this enzyme is part of the viral RNA-dependent RNA polymerase complex. The sequence is that of RNA-directed RNA polymerase beta chain from Escherichia phage BZ13 (Bacteriophage BZ13).